Consider the following 315-residue polypeptide: Replication factor C small subunit (315 aa).

43-50 contacts ATP; that stretch reads GSPGVGKT.

The protein belongs to the activator 1 small subunits family. RfcS subfamily. Heteromultimer composed of small subunits (RfcS) and large subunits (RfcL).

Its function is as follows. Part of the RFC clamp loader complex which loads the PCNA sliding clamp onto DNA. This is Replication factor C small subunit from Methanococcus vannielii (strain ATCC 35089 / DSM 1224 / JCM 13029 / OCM 148 / SB).